The primary structure comprises 413 residues: Multifunctional CCA protein (413 aa).

Residues Gly-8 and Arg-11 each coordinate ATP. 2 residues coordinate CTP: Gly-8 and Arg-11. 2 residues coordinate Mg(2+): Asp-21 and Asp-23. Residues Arg-91, Arg-143, and Arg-146 each coordinate ATP. CTP contacts are provided by Arg-91, Arg-143, and Arg-146. The HD domain maps to 232 to 333; it reads TGVHVMMVVD…VRFFERTDAL (102 aa).

This sequence belongs to the tRNA nucleotidyltransferase/poly(A) polymerase family. Bacterial CCA-adding enzyme type 1 subfamily. Monomer. Can also form homodimers and oligomers. It depends on Mg(2+) as a cofactor. Requires Ni(2+) as cofactor.

It carries out the reaction a tRNA precursor + 2 CTP + ATP = a tRNA with a 3' CCA end + 3 diphosphate. It catalyses the reaction a tRNA with a 3' CCA end + 2 CTP + ATP = a tRNA with a 3' CCACCA end + 3 diphosphate. In terms of biological role, catalyzes the addition and repair of the essential 3'-terminal CCA sequence in tRNAs without using a nucleic acid template. Adds these three nucleotides in the order of C, C, and A to the tRNA nucleotide-73, using CTP and ATP as substrates and producing inorganic pyrophosphate. tRNA 3'-terminal CCA addition is required both for tRNA processing and repair. Also involved in tRNA surveillance by mediating tandem CCA addition to generate a CCACCA at the 3' terminus of unstable tRNAs. While stable tRNAs receive only 3'-terminal CCA, unstable tRNAs are marked with CCACCA and rapidly degraded. This is Multifunctional CCA protein from Burkholderia multivorans (strain ATCC 17616 / 249).